The chain runs to 550 residues: Coiled-coil domain-containing protein 102A (550 aa).

Disordered stretches follow at residues 1-69 (MSHG…DGDW) and 138-247 (GARR…ATEE). Phosphoserine occurs at positions 12, 26, and 28. The span at 37 to 61 (SLPPTPPSGTPSPGPPPALPLPPAP) shows a compositional bias: pro residues. A coiled-coil region spans residues 72–161 (REELRLRELE…ARGRELARLR (90 aa)). Basic and acidic residues-rich tracts occupy residues 138-159 (GARRERQEAQGECEARGRELAR) and 169-188 (QTRDGPEPEAEREPVRDVGS). Coiled coils occupy residues 263–396 (QKVL…RRQT) and 427–518 (KLKK…NAPL). 2 disordered regions span residues 472–497 (DELDEAHNQARKLQRSLDEQTEQSEN) and 509–550 (LRRQ…IQVA). Residues 530 to 550 (EEAEDGTSDLDEDEDLQIQVA) are compositionally biased toward acidic residues. At Ser537 the chain carries Phosphoserine.

This Homo sapiens (Human) protein is Coiled-coil domain-containing protein 102A (CCDC102A).